A 439-amino-acid chain; its full sequence is Perilipin-3 (439 aa).

The span at 1–19 shows a compositional bias: low complexity; it reads MFASETEASASSTQVTTEE. Positions 1–26 are disordered; that stretch reads MFASETEASASSTQVTTEEPVQQPSV. At Lys-66 the chain carries N6-acetyllysine. Ser-92 is subject to Phosphoserine. Residue Lys-123 forms a Glycyl lysine isopeptide (Lys-Gly) (interchain with G-Cter in SUMO1) linkage. Ser-131 bears the Phosphoserine mark. Position 175 is a phosphothreonine (Thr-175). Phosphoserine occurs at positions 180 and 184. Residue Thr-221 is modified to Phosphothreonine. Ser-222 and Ser-246 each carry phosphoserine. 2 coiled-coil regions span residues 254 to 282 and 358 to 381; these read RAYE…QALS and AHVK…FSGM. Tyr-256 is subject to Phosphotyrosine.

It belongs to the perilipin family. As to quaternary structure, homooligomer. Interacts with M6PR (via the cytoplasmic domain). Interacts with IGF2R (via the cytoplasmic domain). In terms of processing, phosphorylation at Tyr-256 by isoform 1 of CHKA (CHKalpha2) promotes dissociation from lipid droplets: dissociation is followed by recruitment of autophagosome machinery to lipid droplets and subsequent lipid droplet lipolysis.

It is found in the lipid droplet. Its subcellular location is the endosome membrane. It localises to the cytoplasm. Functionally, structural component of lipid droplets, which is required for the formation and maintenance of lipid storage droplets. Required for the transport of mannose 6-phosphate receptors (MPR) from endosomes to the trans-Golgi network. The polypeptide is Perilipin-3 (PLIN3) (Sus scrofa (Pig)).